Reading from the N-terminus, the 543-residue chain is Bifunctional riboflavin biosynthesis protein RIBA 1, chloroplastic (543 aa).

A chloroplast-targeting transit peptide spans methionine 1–lysine 56. The interval alanine 57–lysine 328 is DHBP synthase. Residues arginine 152–glutamate 153, aspartate 157, arginine 267–threonine 271, and glutamate 291 contribute to the D-ribulose 5-phosphate site. A Mg(2+)-binding site is contributed by glutamate 153. Histidine 270 contributes to the Mg(2+) binding site. The segment at arginine 329–serine 543 is GTP cyclohydrolase II. Arginine 379–glutamate 383 is a binding site for GTP. Zn(2+) is bound by residues cysteine 384, cysteine 395, and cysteine 397. GTP contacts are provided by residues glutamine 400, glutamate 423–arginine 425, and threonine 445. Aspartate 457 (proton acceptor; for GTP cyclohydrolase activity) is an active-site residue. The active-site Nucleophile; for GTP cyclohydrolase activity is arginine 459. The GTP site is built by threonine 480 and lysine 485.

The protein in the N-terminal section; belongs to the DHBP synthase family. This sequence in the C-terminal section; belongs to the GTP cyclohydrolase II family. Mg(2+) serves as cofactor. Requires Mn(2+) as cofactor. It depends on Zn(2+) as a cofactor. In terms of tissue distribution, expressed in leaves, shoots, roots, flowers and siliques.

The protein resides in the plastid. Its subcellular location is the chloroplast. It catalyses the reaction D-ribulose 5-phosphate = (2S)-2-hydroxy-3-oxobutyl phosphate + formate + H(+). The catalysed reaction is GTP + 4 H2O = 2,5-diamino-6-hydroxy-4-(5-phosphoribosylamino)-pyrimidine + formate + 2 phosphate + 3 H(+). It functions in the pathway cofactor biosynthesis; riboflavin biosynthesis; 2-hydroxy-3-oxobutyl phosphate from D-ribulose 5-phosphate: step 1/1. It participates in cofactor biosynthesis; riboflavin biosynthesis; 5-amino-6-(D-ribitylamino)uracil from GTP: step 1/4. In terms of biological role, involved in riboflavin biosynthesis. Catalyzes both the conversion of D-ribulose 5-phosphate to formate and 3,4-dihydroxy-2-butanone 4-phosphate and the conversion of GTP to 2,5-diamino-6-ribosylamino-4(3H)-pyrimidinone 5'-phosphate (DARP), formate and pyrophosphate. RIBA2 and RIBA3 together are not able to complement the loss of function of RIBA1. The sequence is that of Bifunctional riboflavin biosynthesis protein RIBA 1, chloroplastic (RIBA1) from Arabidopsis thaliana (Mouse-ear cress).